Reading from the N-terminus, the 527-residue chain is Catalase (527 aa).

Residues 1 to 22 show a composition bias toward basic and acidic residues; that stretch reads MADSRDPASDQMKQWKEQRAPQ. The tract at residues 1-34 is disordered; that stretch reads MADSRDPASDQMKQWKEQRAPQKPDVLTTGGGNP. Residue alanine 2 is modified to N-acetylalanine. A Phosphoserine modification is found at serine 9. Lysine 13 is subject to N6-succinyllysine. Residues histidine 75 and asparagine 148 contribute to the active site. NADP(+) contacts are provided by histidine 194, serine 201, arginine 203, and asparagine 213. The residue at position 221 (lysine 221) is an N6-succinyllysine. Position 233 is an N6-acetyllysine (lysine 233). Positions 237, 303, 305, and 306 each coordinate NADP(+). Lysine 306 carries the post-translational modification N6-acetyllysine; alternate. Position 306 is an N6-succinyllysine; alternate (lysine 306). Tyrosine 358 lines the heme pocket. Residues serine 417 and serine 434 each carry the phosphoserine modification. N6-acetyllysine; alternate occurs at positions 449 and 480. 2 positions are modified to N6-succinyllysine; alternate: lysine 449 and lysine 480. The residue at position 511 (threonine 511) is a Phosphothreonine. Serine 517 carries the post-translational modification Phosphoserine. Residue lysine 522 is modified to N6-succinyllysine. Residues 524-527 carry the Microbody targeting signal; atypical motif; it reads KANL.

It belongs to the catalase family. In terms of assembly, homotetramer. Interacts (via microbody targeting signal) with PEX5, monomeric form interacts with PEX5, leading to its translocation into peroxisomes. Requires heme as cofactor. It depends on NADP(+) as a cofactor. Expressed in renal proximal tubules (at protein level).

Its subcellular location is the peroxisome matrix. The enzyme catalyses 2 H2O2 = O2 + 2 H2O. Functionally, catalyzes the degradation of hydrogen peroxide (H(2)O(2)) generated by peroxisomal oxidases to water and oxygen, thereby protecting cells from the toxic effects of hydrogen peroxide. Promotes growth of cells including T-cells, B-cells, myeloid leukemia cells, melanoma cells, mastocytoma cells and normal and transformed fibroblast cells. This Rattus norvegicus (Rat) protein is Catalase (Cat).